Consider the following 369-residue polypeptide: MSQSVVVNPRPALKAKLTKEPFSIPNLKPYYKAWPTAVNPDYPGLKVALEARIKNLYPPKKAAKLIQDDYALLSSMWWPRATADRLQTCTFWFLWLFTWDDEIDQSTSDLFIHIHKANDFRKESLEYVKFCLGVGDDETAKWDFQNNPPNRPLIRSLDVIGAHLQKVYNHDQIMTFVNEIDYYMGCQQREQKRKLTGRLPIVAEYLETRMGTSAVTSMLALNEFADGNDIPRDIMTDPKMISLWYEVNMNMSLSNDLLSLRKEIKHGDIDSMVPVLVSARGLTVRQAVKETEAEINRNIERFDQIADALLEEIKLTHPEKVDEVASYIVGCRYNQMANFLWSLTTTRYGLGDMVRDAEGRIPIVIENVN.

Mg(2+) is bound by residues D100, N248, S252, and D256. The DDXXD motif motif lies at 100-104 (DDEID). Positions 255 to 262 (NDLLSLRK) match the (N,D)D(L,I,V)X(S,T)XXXE motif motif.

It belongs to the terpene synthase family. Requires Mg(2+) as cofactor.

In terms of biological role, sesquiterpene cyclase; part of the gene cluster that mediates the biosynthesis of heptelidic acid (HA), a sesquiterpene lactone that acts as an inhibitor of glyceraldehyde-3-phosphatedehydrogenase (GAPDH) and a growth inhibitor of the salt-tolerant lactic acid bacteria in soy sauce brewing. The protein is Sesquiterpene cyclase hepA of Aspergillus oryzae (strain ATCC 42149 / RIB 40) (Yellow koji mold).